Here is a 331-residue protein sequence, read N- to C-terminus: PHD finger protein 11 (331 aa).

The segment at 42 to 78 (KRTCALCPKDVEYNVLYFAQSENIAAHENCLLYSSGL) adopts a C2HC pre-PHD-type zinc-finger fold. The PHD-type zinc-finger motif lies at 108–160 (LKCKFCHKRGATVGCDLKNCNKNYHFFCAKKDDAVPQSDGVRGIYKLLCQQHA).

Interacts with BRCA1 and RELA. As to expression, highly expressed in T and B-cells, as well as natural killer and mature dendritic cells. Expressed at higher levels in Th1 as compared to Th2 cells. Expressed at low levels in all normal tissues tested, including lung, testis, small intestine, breast, liver and placenta.

Its subcellular location is the nucleus. Positive regulator of Th1-type cytokine gene expression. In Homo sapiens (Human), this protein is PHD finger protein 11 (PHF11).